A 274-amino-acid polypeptide reads, in one-letter code: Diaminopimelate epimerase (274 aa).

3 residues coordinate substrate: Asn11, Gln44, and Asn64. Catalysis depends on Cys73, which acts as the Proton donor. Substrate-binding positions include 74–75 (GN), Asn157, Asn190, and 208–209 (ER). Residue Cys217 is the Proton acceptor of the active site. 218–219 (GS) provides a ligand contact to substrate.

This sequence belongs to the diaminopimelate epimerase family. In terms of assembly, homodimer.

The protein resides in the cytoplasm. It carries out the reaction (2S,6S)-2,6-diaminopimelate = meso-2,6-diaminopimelate. Its pathway is amino-acid biosynthesis; L-lysine biosynthesis via DAP pathway; DL-2,6-diaminopimelate from LL-2,6-diaminopimelate: step 1/1. Its function is as follows. Catalyzes the stereoinversion of LL-2,6-diaminopimelate (L,L-DAP) to meso-diaminopimelate (meso-DAP), a precursor of L-lysine and an essential component of the bacterial peptidoglycan. The polypeptide is Diaminopimelate epimerase (Shigella boydii serotype 18 (strain CDC 3083-94 / BS512)).